Reading from the N-terminus, the 294-residue chain is Histone deacetylase HDT3 (294 aa).

Position 1 is an N-acetylmethionine (Met-1). Residues 2–5 (EFWG) are required to repress transcription. The tract at residues 124–269 (QVNFQLPNED…TPKSAGAFGC (146 aa)) is disordered. Over residues 140–188 (DDADGSEEDSSDDDDSENSGDEEEEKVTAESDSEEDDSSDDEEDDSSEE) the composition is skewed to acidic residues. The span at 189–202 (ETPKKPEEPKKRSA) shows a compositional bias: basic and acidic residues. Over residues 203-213 (EPNSSKNPASN) the composition is skewed to low complexity. A compositionally biased stretch (polar residues) spans 252 to 262 (GETSKQQQTPK). The C2H2-type zinc finger occupies 267–290 (FGCKSCTRTFTSEMGLQSHTKAKH).

This sequence belongs to the histone deacetylase HD2 family. As to quaternary structure, interacts with DNMT2. In terms of tissue distribution, expressed in leaves, roots, stems, young plantlets, flowers and siliques. Highest levels in ovules, embryos, shoot apical meristems and first leaves. Also expressed in somatic embryos.

The protein resides in the nucleus. It localises to the nucleolus. In terms of biological role, probably mediates the deacetylation of lysine residues on the N-terminal part of the core histones (H2A, H2B, H3 and H4). Histone deacetylation gives a tag for epigenetic repression and plays an important role in transcriptional regulation, cell cycle progression and developmental events. Involved in the modulation of abscisic acid and stress-responsive genes. This is Histone deacetylase HDT3 (HDT3) from Arabidopsis thaliana (Mouse-ear cress).